The following is a 261-amino-acid chain: MDWGTLHTVIGGVNKHSTSIGKVWITVIFIFRVMILVVAAQEVWGDEQEDFVCNTLQPGCKNVCYDHFFPVSHIRLWALQLIFVSTPALLVAMHVAYYRHETARKFIRGEKRNEFKDLEDIKRQKVRIEGSLWWTYTSSIFFRIIFEAAFMYVFYFLYNGYHLPWVLKCGIDPCPNLVDCFISRPTEKTVFTVFMISASVICMLLNVAELCYLLLKLCFRRSKRTQAQRNHPNHALKESKQNEMNELISDSGQNAITSFPS.

Residues 1–22 (MDWGTLHTVIGGVNKHSTSIGK) are Cytoplasmic-facing. The helical transmembrane segment at 23 to 45 (VWITVIFIFRVMILVVAAQEVWG) threads the bilayer. At 46 to 75 (DEQEDFVCNTLQPGCKNVCYDHFFPVSHIR) the chain is on the extracellular side. The chain crosses the membrane as a helical span at residues 76–98 (LWALQLIFVSTPALLVAMHVAYY). Topologically, residues 99 to 131 (RHETARKFIRGEKRNEFKDLEDIKRQKVRIEGS) are cytoplasmic. The helical transmembrane segment at 132-154 (LWWTYTSSIFFRIIFEAAFMYVF) threads the bilayer. Topologically, residues 155-192 (YFLYNGYHLPWVLKCGIDPCPNLVDCFISRPTEKTVFT) are extracellular. Residues 193–215 (VFMISASVICMLLNVAELCYLLL) form a helical membrane-spanning segment. Over 216–261 (KLCFRRSKRTQAQRNHPNHALKESKQNEMNELISDSGQNAITSFPS) the chain is Cytoplasmic.

This sequence belongs to the connexin family. Beta-type (group I) subfamily. A connexon is composed of a hexamer of connexins. Interacts with CNST. In terms of tissue distribution, highly expressed in adult brain and skin. Less in uterus, lung and eye. Very low in testis and sciatic nerve. No expression before birth.

It is found in the cell membrane. The protein localises to the cell junction. The protein resides in the gap junction. Functionally, one gap junction consists of a cluster of closely packed pairs of transmembrane channels, the connexons, through which materials of low MW diffuse from one cell to a neighboring cell. The protein is Gap junction beta-6 protein (Gjb6) of Mus musculus (Mouse).